The primary structure comprises 204 residues: MHKGMLVVVSGPSGAGKGTICQEIRKRNPNLFYSISATTREKRVGEIDGVHYYFIDRQQFEKMIANDEFLEWADVYGNYYGTPKKPVFEALARGQDVILEIDIKGARQVKKTYPEGVFVFILPPSISILEERLRKRGTDKEEIIVKRMQMAWEEIANCDWYDYLILNDDLETAVNDLEAVLTAEKLKPKRVNYRVLLEGGVLER.

The Guanylate kinase-like domain maps to 4–182 (GMLVVVSGPS…AVNDLEAVLT (179 aa)). Position 11-18 (11-18 (GPSGAGKG)) interacts with ATP.

This sequence belongs to the guanylate kinase family.

Its subcellular location is the cytoplasm. It carries out the reaction GMP + ATP = GDP + ADP. Its function is as follows. Essential for recycling GMP and indirectly, cGMP. This chain is Guanylate kinase, found in Carboxydothermus hydrogenoformans (strain ATCC BAA-161 / DSM 6008 / Z-2901).